Consider the following 117-residue polypeptide: Protein Aeq5-like2 (117 aa).

At 1–36 the chain is on the cytoplasmic side; the sequence is MLVNARAIRQSIGIVVAQCRRDLESNRTLDYRTRMR. A helical membrane pass occupies residues 37–56; it reads TSLILVAMVMVSVLLPYTYG. The Extracellular portion of the chain corresponds to 57–117; the sequence is SSCDSFCTEQ…RFTKEPTEES (61 aa). Intrachain disulfides connect cysteine 59-cysteine 94, cysteine 63-cysteine 90, cysteine 70-cysteine 83, and cysteine 74-cysteine 80.

In terms of processing, the mature peptide may be cleaved at a dibasic residue site and be shorter than the sequence shown (possibly residues 1-94). In terms of tissue distribution, expressed in endodermal ganglion neurons, apparently bipolar and following mesentery folds (observed in both planulae and primary polyps). It not expressed in nematocytes.

Its subcellular location is the membrane. This Nematostella vectensis (Starlet sea anemone) protein is Protein Aeq5-like2.